The following is a 638-amino-acid chain: 1-deoxy-D-xylulose-5-phosphate synthase (638 aa).

Thiamine diphosphate is bound by residues histidine 72 and 113-115; that span reads GHA. Aspartate 144 is a binding site for Mg(2+). Thiamine diphosphate-binding positions include 145–146, asparagine 174, tyrosine 287, and glutamate 370; that span reads GA. Position 174 (asparagine 174) interacts with Mg(2+).

Belongs to the transketolase family. DXPS subfamily. As to quaternary structure, homodimer. Requires Mg(2+) as cofactor. It depends on thiamine diphosphate as a cofactor.

The enzyme catalyses D-glyceraldehyde 3-phosphate + pyruvate + H(+) = 1-deoxy-D-xylulose 5-phosphate + CO2. It participates in metabolic intermediate biosynthesis; 1-deoxy-D-xylulose 5-phosphate biosynthesis; 1-deoxy-D-xylulose 5-phosphate from D-glyceraldehyde 3-phosphate and pyruvate: step 1/1. Functionally, catalyzes the acyloin condensation reaction between C atoms 2 and 3 of pyruvate and glyceraldehyde 3-phosphate to yield 1-deoxy-D-xylulose-5-phosphate (DXP). This Thermosynechococcus vestitus (strain NIES-2133 / IAM M-273 / BP-1) protein is 1-deoxy-D-xylulose-5-phosphate synthase.